The chain runs to 233 residues: Large ribosomal subunit protein uL1 (233 aa).

This sequence belongs to the universal ribosomal protein uL1 family. In terms of assembly, part of the 50S ribosomal subunit.

Its function is as follows. Binds directly to 23S rRNA. The L1 stalk is quite mobile in the ribosome, and is involved in E site tRNA release. Functionally, protein L1 is also a translational repressor protein, it controls the translation of the L11 operon by binding to its mRNA. The polypeptide is Large ribosomal subunit protein uL1 (Deinococcus geothermalis (strain DSM 11300 / CIP 105573 / AG-3a)).